We begin with the raw amino-acid sequence, 286 residues long: Nucleotide-binding protein Tgr7_0722 (286 aa).

Residue 8–15 coordinates ATP; it reads GLSGSGKS. GTP is bound at residue 60-63; that stretch reads DVRS.

The protein belongs to the RapZ-like family.

Its function is as follows. Displays ATPase and GTPase activities. The chain is Nucleotide-binding protein Tgr7_0722 from Thioalkalivibrio sulfidiphilus (strain HL-EbGR7).